The sequence spans 634 residues: MTNSNLRTENHFDYVKITLASPDRVMEWGQRTLPNGQVVGEVTKPETINYRTLKPEMDGLFCEKIFGPSKDWECHCGKYKRVRHRGIVCERCGVEVTESRVRRHRMGFIKLAAPVSHVWYLKGIPSYVAILLDMPLRDVEQIVYFNCYVVLDPGDHKDLKYKQLLTEDEWLEIEDEIYAEDSEIENEPVVGIGAEALKQLLEDLTLDEVAEQLREEINGSKGQKRAKLIKRLRVIDNFIATNARPEWMVLDVIPVIPPDLRPMVQLDGGRFATSDLNDLYRRVINRNNRLARLQEILAPEIIVRNEKRMLQEAVDALIDNGRRGRTVVGANNRPLKSLSDIIEGKQGRFRQNLLGKRVDYSGRSVIVVGPKLKMHQCGLPKEMAIELFQPFVIHRLIRQNIVNNIKAAKKLIQRADDEVMQVLQEVIEGHPILLNRAPTLHRLGIQAFEPKLVDGRAIQLHPLVCPAFNADFDGDQMAVHVPLAIEAQTEARMLMLASNNILSPATGEPIITPSQDMVLGSYYLTALQPGASKPDFGDRSCTFAGLEDVIHAFEDNRIGLHDWVWVRFNGEVQDDEELDAPSKSESLSDGTRIEEWSYRRDRFDEDGALISRYILTTVGRVVMNHTIIDAVAAA.

4 residues coordinate Zn(2+): cysteine 74, cysteine 76, cysteine 89, and cysteine 92. Aspartate 471, aspartate 473, and aspartate 475 together coordinate Mg(2+).

This sequence belongs to the RNA polymerase beta' chain family. RpoC1 subfamily. In terms of assembly, in cyanobacteria the RNAP catalytic core is composed of 2 alpha, 1 beta, 1 beta', 1 gamma and 1 omega subunit. When a sigma factor is associated with the core the holoenzyme is formed, which can initiate transcription. Requires Mg(2+) as cofactor. Zn(2+) serves as cofactor.

The catalysed reaction is RNA(n) + a ribonucleoside 5'-triphosphate = RNA(n+1) + diphosphate. Functionally, DNA-dependent RNA polymerase catalyzes the transcription of DNA into RNA using the four ribonucleoside triphosphates as substrates. In Synechococcus sp. (strain CC9605), this protein is DNA-directed RNA polymerase subunit gamma.